Consider the following 256-residue polypeptide: POU domain class 2-associating factor 1 (256 aa).

The interval 1 to 24 (MLWQKSTAPEQAPAPPRPYQGVRV) is disordered. The 23-residue stretch at 16 to 38 (PRPYQGVRVKEPVKELLRRKRGH) folds into the OCA domain.

Belongs to the POU2AF family. In terms of assembly, interacts with POU2F1/OCT1 and POU2F2/OCT2; the interaction increases POU2F1 and POU2F2 transactivation activity. In terms of processing, ubiquitinated; mediated by SIAH1 or SIAH2 and leading to its subsequent proteasomal degradation. In terms of tissue distribution, B-cell specific.

The protein localises to the nucleus. In terms of biological role, transcriptional coactivator that specifically associates with either POU2F1/OCT1 or POU2F2/OCT2. It boosts the POU2F1/OCT1 mediated promoter activity and to a lesser extent, that of POU2F2/OCT2. It recognizes the POU domains of POU2F1/OCT1 and POU2F2/OCT2. It is essential for the response of B-cells to antigens and required for the formation of germinal centers. Regulates IL6 expression in B cells as POU2F2/OCT2 coactivator. In Mus musculus (Mouse), this protein is POU domain class 2-associating factor 1.